We begin with the raw amino-acid sequence, 444 residues long: Enolase 2 (444 aa).

His165 and Glu174 together coordinate substrate. The active-site Proton donor is Glu217. The Mg(2+) site is built by Asp252, Glu303, and Asp330. Substrate-binding residues include Glu303 and Asp330. Catalysis depends on Lys355, which acts as the Proton acceptor. Substrate is bound by residues 382–385 (SHRS) and Lys406.

Belongs to the enolase family. Homodimer. It depends on Mg(2+) as a cofactor.

It is found in the cytoplasm. It catalyses the reaction (2R)-2-phosphoglycerate = phosphoenolpyruvate + H2O. It participates in carbohydrate degradation; glycolysis; pyruvate from D-glyceraldehyde 3-phosphate: step 4/5. The sequence is that of Enolase 2 (ENO2) from Toxoplasma gondii.